The sequence spans 218 residues: Probable transaldolase (218 aa).

The active-site Schiff-base intermediate with substrate is K83.

Belongs to the transaldolase family. Type 3B subfamily.

It localises to the cytoplasm. It catalyses the reaction D-sedoheptulose 7-phosphate + D-glyceraldehyde 3-phosphate = D-erythrose 4-phosphate + beta-D-fructose 6-phosphate. Its pathway is carbohydrate degradation; pentose phosphate pathway; D-glyceraldehyde 3-phosphate and beta-D-fructose 6-phosphate from D-ribose 5-phosphate and D-xylulose 5-phosphate (non-oxidative stage): step 2/3. In terms of biological role, transaldolase is important for the balance of metabolites in the pentose-phosphate pathway. The sequence is that of Probable transaldolase from Thermotoga sp. (strain RQ2).